The primary structure comprises 477 residues: MQFSSYRDLREKLLAREMSCEAVVTAYLQRIEATRDRNIYISVFYDEALRQARSLDRKLDAGETPGKLFGMPMAIKDNISIEGTGLTCASKILSNYTAVYDATVIRRLKEEDAVFLGKVNMDEFAMGSSNENSSFGPVPNPYDSTKVPGGSSGGSAAAVAGDLALVALGSDTGGSVRQPAGFCNVVGLKPTYGRISRYGVVAFGSSFDQIGILSKNADDAAAVLGVIAGNDGSDATSSHNQVPDYAAEMEGVSLRGLKIGIPKEYFPESLNSDVASVIQERLDLLRSLGAEMIPITLPESDYAIAAYYILTTAEASSNLARFDGARYGYRSEKSSDLTDMYVNSRTEGFGEEVKRRIMLGTYVLSAGYYDTYYKKAQQVRRVFLNRYREALANVDVIAGPTSPFPPFGIGDKMDDPLEMYLADVFTVPASIAGIPALSVPVGFDSSGLPVGMQLIGNFFEEGKLLGTARAVQNAGKV.

Catalysis depends on charge relay system residues Lys-76 and Ser-151. Residue Ser-175 is the Acyl-ester intermediate of the active site.

Belongs to the amidase family. GatA subfamily. In terms of assembly, heterotrimer of A, B and C subunits.

It carries out the reaction L-glutamyl-tRNA(Gln) + L-glutamine + ATP + H2O = L-glutaminyl-tRNA(Gln) + L-glutamate + ADP + phosphate + H(+). Its function is as follows. Allows the formation of correctly charged Gln-tRNA(Gln) through the transamidation of misacylated Glu-tRNA(Gln) in organisms which lack glutaminyl-tRNA synthetase. The reaction takes place in the presence of glutamine and ATP through an activated gamma-phospho-Glu-tRNA(Gln). In Prosthecochloris aestuarii (strain DSM 271 / SK 413), this protein is Glutamyl-tRNA(Gln) amidotransferase subunit A.